We begin with the raw amino-acid sequence, 542 residues long: Chaperonin GroEL 2 (542 aa).

Residues 30-33 (TLGP), K51, 87-91 (DGTTT), G415, and D495 each bind ATP.

It belongs to the chaperonin (HSP60) family. In terms of assembly, forms a cylinder of 14 subunits composed of two heptameric rings stacked back-to-back. Interacts with the co-chaperonin GroES.

It is found in the cytoplasm. It catalyses the reaction ATP + H2O + a folded polypeptide = ADP + phosphate + an unfolded polypeptide.. Functionally, together with its co-chaperonin GroES, plays an essential role in assisting protein folding. The GroEL-GroES system forms a nano-cage that allows encapsulation of the non-native substrate proteins and provides a physical environment optimized to promote and accelerate protein folding. In Methylococcus capsulatus (strain ATCC 33009 / NCIMB 11132 / Bath), this protein is Chaperonin GroEL 2.